The sequence spans 332 residues: MATGGYRSSGSTTDFLEEWKAKREKMRAKQNPVGPGSSGGDPAAKSPAGPLAQTTAAGTSELNHGPAGAAAPAAPGPGALNCAHGSSALPRGAPGSRRPEDECPIAAGAAGAPASRGDEEEPDSAPEKGRSSGPSARKGKGQIEKRKLREKRRSTGVVNIPAAECLDEYEDDEAGQKERKREDAITQQNTIQNEAASLPDPGTSYLPQDPSRTVPGRYKSTISAPEEEILNRYPRTDRSGFSRHNRDTSAPANFASSSTLEKRIEDLEKEVLRERQENLRLTRLMQDKEEMIGKLKEEIDLLNRDLDDMEDENEQLKQENKTLLKVVGQLTR.

2 stretches are compositionally biased toward polar residues: residues 1–14 and 52–62; these read MATG…STTD and AQTTAAGTSEL. Residues 1 to 253 are disordered; that stretch reads MATGGYRSSG…HNRDTSAPAN (253 aa). The short motif at 61 to 65 is the B30.2/SPRY domain-binding motif element; the sequence is ELNHG. Low complexity predominate over residues 65 to 79; sequence GPAGAAAPAAPGPGA. Positions 137 to 153 match the Nuclear localization signal motif; that stretch reads RKGKGQIEKRKLREKRR. The tract at residues 137–195 is selective for apoptosis induction in cancer cells (SAC); the sequence is RKGKGQIEKRKLREKRRSTGVVNIPAAECLDEYEDDEAGQKERKREDAITQQNTIQNEA. T155 carries the phosphothreonine; by PKA modification. Over residues 174 to 184 the composition is skewed to basic and acidic residues; sequence AGQKERKREDA. Residues 176–198 adopt a coiled-coil conformation; it reads QKERKREDAITQQNTIQNEAASL. The segment covering 185–195 has biased composition (polar residues); that stretch reads ITQQNTIQNEA. S223 carries the phosphoserine modification. Basic and acidic residues predominate over residues 234–247; that stretch reads PRTDRSGFSRHNRD. Residues 292–332 form a leucine-zipper region; sequence IGKLKEEIDLLNRDLDDMEDENEQLKQENKTLLKVVGQLTR.

As to quaternary structure, homooligomer. Interacts (via the C-terminal region) with WT1. Interacts with THAP1. Interacts with AATF. Interacts with BACE1. Interacts with SPSB1 (via B30.2/SPRY domain); this interaction is direct and occurs in association with the Elongin BC complex. Interacts with SPSB2 (via B30.2/SPRY domain); this interaction occurs in association with the Elongin BC complex. Interacts with SPSB4 (via B30.2/SPRY domain); this interaction occurs in association with the Elongin BC complex. Component of a ternary complex composed of SQSTM1 and PRKCZ. Interacts with actin. Preferentially phosphorylated at the Thr-155 by PKC in cancer cells.

It localises to the cytoplasm. It is found in the nucleus. Pro-apoptotic protein capable of selectively inducing apoptosis in cancer cells, sensitizing the cells to diverse apoptotic stimuli and causing regression of tumors in animal models. Induces apoptosis in certain cancer cells by activation of the Fas prodeath pathway and coparallel inhibition of NF-kappa-B transcriptional activity. Inhibits the transcriptional activation and augments the transcriptional repression mediated by WT1. Down-regulates the anti-apoptotic protein BCL2 via its interaction with WT1. Also seems to be a transcriptional repressor by itself. May be directly involved in regulating the amyloid precursor protein (APP) cleavage activity of BACE1. This is PRKC apoptosis WT1 regulator protein (Pawr) from Rattus norvegicus (Rat).